A 158-amino-acid chain; its full sequence is Scytalone dehydratase-like protein CPUR_05428 (158 aa).

Substrate contacts are provided by Tyr24 and Tyr44. Active-site residues include His79 and His104.

It belongs to the scytalone dehydratase family.

It functions in the pathway pigment biosynthesis. Scytalone dehydratase-like protein; part of the ergochrome gene cluster responsible for the typical purple-black color of the ergot sclerotia. The ergochrome gene cluster produces several ergot pigments including the yellow ergochrome secalonic acid and its derivatives, as well as the red anthraquinones endocrocin and clavorubin. The pathway begins with the synthesis of atrochrysone thioester by the polyketide synthase (PKS) CPUR_05437. The atrochrysone carboxyl ACP thioesterase CPUR_05436 then breaks the thioester bond and releases the atrochrysone carboxylic acid from CPUR_05437. The atrochrysone carboxylic acid is then converted to atrochrysone which is further transformed into emodin anthrone. The next step is performed by the anthrone oxygenase CPUR_05434 that catalyzes the oxidation of emodinanthrone to emodin. Emodin is further modified to yield monodictyphenone via several steps involving CPUR_05427, CPUR_05428, CPUR_05429 and CPUR_05430. The short chain dehydrogenase/reductase CPUR_05418 then catalyzes the C-5 ketoreduction to give the xanthone skeleton of the monomeric units. Ergochromes formation requires further dimerization steps of different xanthone units, probably catalyzed by the cytochrome P450 monooxygenase CPUR_05419. CPUR_05425, CPUR_05426 and CPUR_05431 are unique to Claviceps, thus it is likely that they are involved in further modification of xanthone units or in their dimerization. The yellow ergochromes and the red anthraquinone pigments endocrocin and clavorubin are products from the same PKS derived precursors and the latter are likely shunt products in the pathway of xanthone biosynthesis. It is proposed that atrochrysone carboxylic acid released from the PKS CPUR_05437 can also be converted to endocrocin anthrone which is further oxidized into endocrocin by CPUR_05435. Endocrocin could be then modified to clavorubin, possibly by CPUR_05423 and CPUR_05431. Clavorubin is the principal anthraquinone metabolite produced by the cluster with a much higher yield compared to endocrocin. This chain is Scytalone dehydratase-like protein CPUR_05428, found in Claviceps purpurea (strain 20.1) (Ergot fungus).